A 142-amino-acid chain; its full sequence is Large ribosomal subunit protein uL13 (142 aa).

This sequence belongs to the universal ribosomal protein uL13 family. In terms of assembly, part of the 50S ribosomal subunit.

This protein is one of the early assembly proteins of the 50S ribosomal subunit, although it is not seen to bind rRNA by itself. It is important during the early stages of 50S assembly. In Yersinia pseudotuberculosis serotype O:1b (strain IP 31758), this protein is Large ribosomal subunit protein uL13.